Here is a 190-residue protein sequence, read N- to C-terminus: UPF0301 protein TC_0483 (190 aa).

The protein belongs to the UPF0301 (AlgH) family.

The sequence is that of UPF0301 protein TC_0483 from Chlamydia muridarum (strain MoPn / Nigg).